Reading from the N-terminus, the 325-residue chain is Small ribosomal subunit protein RACK1 (325 aa).

WD repeat units follow at residues 13-44 (AHTD…ILWH), 61-91 (GHSH…RLWD), 103-133 (GHTK…KLWN), 147-179 (AHSD…KVWN), 191-221 (GHSG…LLWD), 232-261 (DAGS…KIWD), and 291-321 (KKVI…RVWG).

This sequence belongs to the WD repeat G protein beta family. Ribosomal protein RACK1 subfamily.

In terms of biological role, plays a role in hormone-mediated cell division. This Medicago sativa (Alfalfa) protein is Small ribosomal subunit protein RACK1 (GB1).